Here is a 212-residue protein sequence, read N- to C-terminus: Thymidylate kinase (212 aa).

ATP is bound at residue 7-14; sequence GIEGCGKS.

It belongs to the thymidylate kinase family.

The catalysed reaction is dTMP + ATP = dTDP + ADP. In terms of biological role, phosphorylation of dTMP to form dTDP in both de novo and salvage pathways of dTTP synthesis. The polypeptide is Thymidylate kinase (Trichlorobacter lovleyi (strain ATCC BAA-1151 / DSM 17278 / SZ) (Geobacter lovleyi)).